A 452-amino-acid chain; its full sequence is tRNA modification GTPase MnmE (452 aa).

(6S)-5-formyl-5,6,7,8-tetrahydrofolate is bound by residues arginine 21, glutamate 78, and lysine 118. Residues 214–375 form the TrmE-type G domain; it reads GMKAVIAGRP…LREHLKTSMG (162 aa). Asparagine 224 serves as a coordination point for K(+). GTP-binding positions include 224-229, 243-249, and 268-271; these read NAGKSS, TNIAGTT, and DTAG. Serine 228 is a Mg(2+) binding site. Threonine 243, isoleucine 245, and threonine 248 together coordinate K(+). Threonine 249 contacts Mg(2+). Lysine 452 is a binding site for (6S)-5-formyl-5,6,7,8-tetrahydrofolate.

This sequence belongs to the TRAFAC class TrmE-Era-EngA-EngB-Septin-like GTPase superfamily. TrmE GTPase family. In terms of assembly, homodimer. Heterotetramer of two MnmE and two MnmG subunits. Requires K(+) as cofactor.

The protein resides in the cytoplasm. Its function is as follows. Exhibits a very high intrinsic GTPase hydrolysis rate. Involved in the addition of a carboxymethylaminomethyl (cmnm) group at the wobble position (U34) of certain tRNAs, forming tRNA-cmnm(5)s(2)U34. The sequence is that of tRNA modification GTPase MnmE from Haemophilus ducreyi (strain 35000HP / ATCC 700724).